The sequence spans 400 residues: Arabinan endo-1,5-alpha-L-arabinosidase B (400 aa).

The first 16 residues, 1-16, serve as a signal peptide directing secretion; the sequence is MAVIFVLFFLVSMALS. Residue Asn-24 is glycosylated (N-linked (GlcNAc...) asparagine). The active-site Proton acceptor is Asp-70. Asn-184 carries N-linked (GlcNAc...) asparagine glycosylation. Glu-277 functions as the Proton donor in the catalytic mechanism. An N-linked (GlcNAc...) asparagine glycan is attached at Asn-372.

This sequence belongs to the glycosyl hydrolase 43 family.

It localises to the secreted. It carries out the reaction Endohydrolysis of (1-&gt;5)-alpha-arabinofuranosidic linkages in (1-&gt;5)-arabinans.. The protein operates within glycan metabolism; L-arabinan degradation. In terms of biological role, endo-1,5-alpha-L-arabinanase involved in degradation of pectin. Its preferred substrate is linear 1,5-alpha-L-arabinan. This chain is Arabinan endo-1,5-alpha-L-arabinosidase B (abnB), found in Emericella nidulans (strain FGSC A4 / ATCC 38163 / CBS 112.46 / NRRL 194 / M139) (Aspergillus nidulans).